Reading from the N-terminus, the 345-residue chain is MNSTIIAVDAMGGDFGPSVVVPGAVDAARERGLKVLLVGDRQKVEEELARIPLDGVEVEVVHASEVAGMDEKPSDILRRKKDASIQVVCRLVRDGHAHGIVSAGHSGASVACGMFIMGRVPGVERPALASVMPTEKQPIVLLDVGANVDCKPHHLFQFGLMANAFARDLLGYETPRIGLLSIGEEEGKGNTLVKEAYELFKLAQNINFVGNVEGRDLFTGEVDVVVCDGFVGNVALKLSEGLSSSMSRVLKRELLSGFLPKLGTLLARSAFKRFARVVDYAEYGGAPLLGLQSIAIVCHGKSNAKAIKSAVNMAATFVEKKTNERVVQAICANEELTRYGKAVRQ.

This sequence belongs to the PlsX family. In terms of assembly, homodimer. Probably interacts with PlsY.

It localises to the cytoplasm. The catalysed reaction is a fatty acyl-[ACP] + phosphate = an acyl phosphate + holo-[ACP]. The protein operates within lipid metabolism; phospholipid metabolism. Catalyzes the reversible formation of acyl-phosphate (acyl-PO(4)) from acyl-[acyl-carrier-protein] (acyl-ACP). This enzyme utilizes acyl-ACP as fatty acyl donor, but not acyl-CoA. The protein is Phosphate acyltransferase of Nitratidesulfovibrio vulgaris (strain ATCC 29579 / DSM 644 / CCUG 34227 / NCIMB 8303 / VKM B-1760 / Hildenborough) (Desulfovibrio vulgaris).